Reading from the N-terminus, the 210-residue chain is MTLPSGVERHDFGGETSLATQGQPVYGERTDGDWRRWDPHRSKLGAMLAHGMDTGLGGGETVLYLGAAAGTTVSHVADFGGPTYAVEFAPRPVRELLDAAESRRNLFPLLKDARKPESYAHVVEPVDVVVQDVATRGQARVATLNKQFLTDDGRLLAAIKARSEDVTADPDAVFDSVRAELSAEYELLETARLDPYHEDHLGIVARPRKD.

The disordered stretch occupies residues 1–34 (MTLPSGVERHDFGGETSLATQGQPVYGERTDGDW). S-adenosyl-L-methionine is bound by residues 71–72 (TT), 87–88 (EF), 112–113 (DA), and 132–135 (DVAT).

Belongs to the methyltransferase superfamily. Fibrillarin family. As to quaternary structure, interacts with nop5. Component of box C/D small ribonucleoprotein (sRNP) particles that contain rpl7ae, FlpA and nop5, plus a guide RNA.

Its function is as follows. Involved in pre-rRNA and tRNA processing. Utilizes the methyl donor S-adenosyl-L-methionine to catalyze the site-specific 2'-hydroxyl methylation of ribose moieties in rRNA and tRNA. Site specificity is provided by a guide RNA that base pairs with the substrate. Methylation occurs at a characteristic distance from the sequence involved in base pairing with the guide RNA. The chain is Fibrillarin-like rRNA/tRNA 2'-O-methyltransferase from Haloarcula marismortui (strain ATCC 43049 / DSM 3752 / JCM 8966 / VKM B-1809) (Halobacterium marismortui).